Consider the following 425-residue polypeptide: UPF0597 protein Moth_1414 (425 aa).

This sequence belongs to the UPF0597 family.

The sequence is that of UPF0597 protein Moth_1414 from Moorella thermoacetica (strain ATCC 39073 / JCM 9320).